Here is a 298-residue protein sequence, read N- to C-terminus: Myoblast determination protein 1 homolog (298 aa).

Residues 53 to 73 (PEEHPHTRAPPREPTEEEHVR) are compositionally biased toward basic and acidic residues. The disordered stretch occupies residues 53–77 (PEEHPHTRAPPREPTEEEHVRAPSG). In terms of domain architecture, bHLH spans 100–151 (DRRKAATMRERRRLSKVNEAFETLKRCTSTNPNQRLPKVEILRNAIRYIESL). Disordered regions lie at residues 170–220 (SGES…GKSS) and 242–298 (CPIL…YQVL). Composition is skewed to polar residues over residues 173 to 183 (SDASSPRSNCS) and 257 to 284 (CSPQEGGNLSDSGAQIPSPTNCTPLPQE).

As to quaternary structure, efficient DNA binding requires dimerization with another bHLH protein. Seems to form active heterodimers with ITF-2.

Its subcellular location is the nucleus. Its function is as follows. Acts as a transcriptional activator that promotes transcription of muscle-specific target genes and plays a role in muscle differentiation. Induces fibroblasts to differentiate into myoblasts. Interacts with and is inhibited by the twist protein. This interaction probably involves the basic domains of both proteins. The chain is Myoblast determination protein 1 homolog (MYOD1) from Gallus gallus (Chicken).